Reading from the N-terminus, the 314-residue chain is ATP synthase gamma chain (314 aa).

It belongs to the ATPase gamma chain family. In terms of assembly, F-type ATPases have 2 components, CF(1) - the catalytic core - and CF(0) - the membrane proton channel. CF(1) has five subunits: alpha(3), beta(3), gamma(1), delta(1), epsilon(1). CF(0) has three main subunits: a, b and c.

The protein resides in the cellular thylakoid membrane. Functionally, produces ATP from ADP in the presence of a proton gradient across the membrane. The gamma chain is believed to be important in regulating ATPase activity and the flow of protons through the CF(0) complex. The chain is ATP synthase gamma chain from Gloeothece citriformis (strain PCC 7424) (Cyanothece sp. (strain PCC 7424)).